The following is a 748-amino-acid chain: Serine/threonine-protein kinase CG17528 (748 aa).

Composition is skewed to polar residues over residues 22-35 and 47-59; these read QASPSATSPQSVPS and EKTNQPHNVQEDN. Disordered regions lie at residues 22–41 and 47–81; these read QASPSATSPQSVPSKANVVT and EKTNQPHNVQEDNNYNRDCDSPESSSSEQDKELDD. Residues serine 67, serine 70, serine 73, serine 87, serine 88, and serine 89 each carry the phosphoserine modification. Threonine 91 bears the Phosphothreonine mark. Serine 93 is subject to Phosphoserine. A Phosphothreonine modification is found at threonine 100. Doublecortin domains are found at residues 158 to 244 and 313 to 396; these read LRIK…VEYN and RIVT…AEDF. The Protein kinase domain maps to 477-735; the sequence is YSLGRIIGDG…SEDILDHSWT (259 aa). Residues 483 to 491 and lysine 506 each bind ATP; that span reads IGDGNFAIV. Catalysis depends on aspartate 598, which acts as the Proton acceptor.

The protein belongs to the protein kinase superfamily. CAMK Ser/Thr protein kinase family. CaMK subfamily.

It catalyses the reaction L-seryl-[protein] + ATP = O-phospho-L-seryl-[protein] + ADP + H(+). The catalysed reaction is L-threonyl-[protein] + ATP = O-phospho-L-threonyl-[protein] + ADP + H(+). The chain is Serine/threonine-protein kinase CG17528 from Drosophila melanogaster (Fruit fly).